The following is a 290-amino-acid chain: Porphobilinogen deaminase (290 aa).

Cys237 carries the S-(dipyrrolylmethanemethyl)cysteine modification.

The protein belongs to the HMBS family. Monomer. It depends on dipyrromethane as a cofactor.

It carries out the reaction 4 porphobilinogen + H2O = hydroxymethylbilane + 4 NH4(+). Its pathway is porphyrin-containing compound metabolism; protoporphyrin-IX biosynthesis; coproporphyrinogen-III from 5-aminolevulinate: step 2/4. Tetrapolymerization of the monopyrrole PBG into the hydroxymethylbilane pre-uroporphyrinogen in several discrete steps. This chain is Porphobilinogen deaminase, found in Clostridium botulinum (strain Kyoto / Type A2).